The following is a 216-amino-acid chain: Adenylate kinase (216 aa).

10–15 (GAGKGT) contacts ATP. Positions 30–59 (STGDMLRAAVKAGTELGIKAKSIMDAGGLV) are NMP. Residues T31, R36, 57 to 59 (GLV), 85 to 88 (GFPR), and Q92 each bind AMP. Positions 122-159 (GRRVHEASGRVYHIVYNPPKIAGKDDITGEELVQRKDD) are LID. Residues R123 and 132–133 (VY) contribute to the ATP site. The AMP site is built by R156 and R167. G202 is an ATP binding site.

Belongs to the adenylate kinase family. In terms of assembly, monomer.

The protein resides in the cytoplasm. It carries out the reaction AMP + ATP = 2 ADP. It functions in the pathway purine metabolism; AMP biosynthesis via salvage pathway; AMP from ADP: step 1/1. In terms of biological role, catalyzes the reversible transfer of the terminal phosphate group between ATP and AMP. Plays an important role in cellular energy homeostasis and in adenine nucleotide metabolism. This chain is Adenylate kinase, found in Pseudomonas fluorescens (strain Pf0-1).